A 234-amino-acid chain; its full sequence is Leucyl/phenylalanyl-tRNA--protein transferase (234 aa).

This sequence belongs to the L/F-transferase family.

It localises to the cytoplasm. The enzyme catalyses N-terminal L-lysyl-[protein] + L-leucyl-tRNA(Leu) = N-terminal L-leucyl-L-lysyl-[protein] + tRNA(Leu) + H(+). It catalyses the reaction N-terminal L-arginyl-[protein] + L-leucyl-tRNA(Leu) = N-terminal L-leucyl-L-arginyl-[protein] + tRNA(Leu) + H(+). The catalysed reaction is L-phenylalanyl-tRNA(Phe) + an N-terminal L-alpha-aminoacyl-[protein] = an N-terminal L-phenylalanyl-L-alpha-aminoacyl-[protein] + tRNA(Phe). Functions in the N-end rule pathway of protein degradation where it conjugates Leu, Phe and, less efficiently, Met from aminoacyl-tRNAs to the N-termini of proteins containing an N-terminal arginine or lysine. This chain is Leucyl/phenylalanyl-tRNA--protein transferase, found in Syntrophobacter fumaroxidans (strain DSM 10017 / MPOB).